Here is a 93-residue protein sequence, read N- to C-terminus: Phosphoribosyl-ATP pyrophosphatase (93 aa).

This sequence belongs to the PRA-PH family.

It localises to the cytoplasm. The enzyme catalyses 1-(5-phospho-beta-D-ribosyl)-ATP + H2O = 1-(5-phospho-beta-D-ribosyl)-5'-AMP + diphosphate + H(+). The protein operates within amino-acid biosynthesis; L-histidine biosynthesis; L-histidine from 5-phospho-alpha-D-ribose 1-diphosphate: step 2/9. The sequence is that of Phosphoribosyl-ATP pyrophosphatase from Rhodococcus jostii (strain RHA1).